Consider the following 323-residue polypeptide: D-alanine--D-alanine ligase (323 aa).

The 199-residue stretch at 102 to 300 (KQIFRAEGIP…FTELVERMLQ (199 aa)) folds into the ATP-grasp domain. An ATP-binding site is contributed by 130–185 (VARLGSPLVVKPSNSGSTVGISLARDEVSLAQGLALASSVSSRVFLERYIPGKEIT). Mg(2+) contacts are provided by D254, E267, and N269.

Belongs to the D-alanine--D-alanine ligase family. Mg(2+) is required as a cofactor. It depends on Mn(2+) as a cofactor.

It localises to the cytoplasm. The enzyme catalyses 2 D-alanine + ATP = D-alanyl-D-alanine + ADP + phosphate + H(+). The protein operates within cell wall biogenesis; peptidoglycan biosynthesis. In terms of biological role, cell wall formation. In Synechococcus sp. (strain JA-3-3Ab) (Cyanobacteria bacterium Yellowstone A-Prime), this protein is D-alanine--D-alanine ligase.